A 430-amino-acid chain; its full sequence is Histidinol dehydrogenase (430 aa).

Residues tyrosine 130, glutamine 191, and asparagine 214 each contribute to the NAD(+) site. Substrate-binding residues include serine 237, glutamine 259, and histidine 262. Zn(2+) is bound by residues glutamine 259 and histidine 262. Catalysis depends on proton acceptor residues glutamate 327 and histidine 328. Substrate-binding residues include histidine 328, aspartate 361, glutamate 415, and histidine 420. Position 361 (aspartate 361) interacts with Zn(2+). Histidine 420 contributes to the Zn(2+) binding site.

It belongs to the histidinol dehydrogenase family. Zn(2+) serves as cofactor.

It catalyses the reaction L-histidinol + 2 NAD(+) + H2O = L-histidine + 2 NADH + 3 H(+). The protein operates within amino-acid biosynthesis; L-histidine biosynthesis; L-histidine from 5-phospho-alpha-D-ribose 1-diphosphate: step 9/9. In terms of biological role, catalyzes the sequential NAD-dependent oxidations of L-histidinol to L-histidinaldehyde and then to L-histidine. This is Histidinol dehydrogenase from Brucella suis biovar 1 (strain 1330).